The chain runs to 802 residues: Neuronal PAS domain-containing protein 4 (802 aa).

A basic motif; degenerate region spans residues 1-13 (MYRSTKGASKARR). The bHLH domain maps to 1–53 (MYRSTKGASKARRDQINAEIRNLKELLPLAEADKVRLSYLHIMSLACIYTRKG). A coiled-coil region spans residues 5–38 (TKGASKARRDQINAEIRNLKELLPLAEADKVRLS). The interval 14 to 53 (DQINAEIRNLKELLPLAEADKVRLSYLHIMSLACIYTRKG) is helix-loop-helix motif. 2 consecutive PAS domains span residues 70–144 (SAQE…LDTD) and 203–273 (PGPG…LAES). The region spanning 278-317 (AEMVVRLQAKTGGWAWIYCLLYSEGPEGPITANNYPISDM) is the PAC domain. 3 stretches are compositionally biased toward polar residues: residues 466-476 (FSDQLTPSSAT), 506-518 (STFP…STAT), and 532-555 (TPPS…QLSP). Disordered regions lie at residues 466–485 (FSDQ…TSPL) and 506–555 (STFP…QLSP). Residues 624–648 (YSEKEQNEIDRLIQQISQLAQGMDR) are a coiled coil. Positions 717 to 749 (LSTPDPSEEWGSGDPEAEGPGGAPSPCNNLSPE) are disordered.

As to quaternary structure, efficient DNA binding requires dimerization with another bHLH protein. Heterodimer; forms a heterodimer with ARNT, ARNT2 or BMAL1. Ubiquitinated, leading to degradation by the proteosome. In terms of tissue distribution, brain.

Its subcellular location is the nucleus. Transcription factor expressed in neurons of the brain that regulates the excitatory-inhibitory balance within neural circuits and is required for contextual memory in the hippocampus. Plays a key role in the structural and functional plasticity of neurons. Acts as an early-response transcription factor in both excitatory and inhibitory neurons, where it induces distinct but overlapping sets of late-response genes in these two types of neurons, allowing the synapses that form on inhibitory and excitatory neurons to be modified by neuronal activity in a manner specific to their function within a circuit, thereby facilitating appropriate circuit responses to sensory experience. In excitatory neurons, activates transcription of BDNF, which in turn controls the number of GABA-releasing synapses that form on excitatory neurons, thereby promoting an increased number of inhibitory synapses on excitatory neurons. In inhibitory neurons, regulates a distinct set of target genes that serve to increase excitatory input onto somatostatin neurons, probably resulting in enhanced feedback inhibition within cortical circuits. The excitatory and inhibitory balance in neurons affects a number of processes, such as short-term and long-term memory, acquisition of experience, fear memory, response to stress and social behavior. Acts as a regulator of dendritic spine development in olfactory bulb granule cells in a sensory-experience-dependent manner by regulating expression of MDM2. Efficient DNA binding requires dimerization with another bHLH protein, such as ARNT, ARNT2 or BMAL1. Can activate the CME (CNS midline enhancer) element. This Homo sapiens (Human) protein is Neuronal PAS domain-containing protein 4.